The sequence spans 354 residues: MSIEVRGLSKRFGAFRALDEVSLHIETGELVALLGPSGCGKTTLLRIIAGLESADAGSVLFAGEDATEVDVRQRQVGFVFQHYALFKHMTVFENVAFGLRVRHRSQRPSEARIRAKVLDLLGLVQLDWLADRYPAQLSGGQRQRIALARALAVEPRVLLLDEPFGALDAKVRKELRRWLRRLHDELHVASVFVTHDQEEALEVTDRVVLMNAGRIEQVGSPREVWERPATPFVYGFLGDVNQLHGHATRGVWRLGEVALPAPDLPEADNQRAIAYVRPHDIDLARAGTAAPGIPVRLNHVYLAGPSAYLELARQDDQAIIEAQVPEPLFRSLGLKEGEALLAQPRRARVFAVQP.

In terms of domain architecture, ABC transporter spans 3–237; it reads IEVRGLSKRF…PATPFVYGFL (235 aa). 35–42 is an ATP binding site; that stretch reads GPSGCGKT.

This sequence belongs to the ABC transporter superfamily. Sulfate/tungstate importer (TC 3.A.1.6) family. In terms of assembly, the complex is composed of two ATP-binding proteins (CysA), two transmembrane proteins (CysT and CysW) and a solute-binding protein (CysP).

The protein resides in the cell inner membrane. The catalysed reaction is sulfate(out) + ATP + H2O = sulfate(in) + ADP + phosphate + H(+). The enzyme catalyses thiosulfate(out) + ATP + H2O = thiosulfate(in) + ADP + phosphate + H(+). Functionally, part of the ABC transporter complex CysAWTP involved in sulfate/thiosulfate import. Responsible for energy coupling to the transport system. The sequence is that of Sulfate/thiosulfate import ATP-binding protein CysA from Bordetella pertussis (strain Tohama I / ATCC BAA-589 / NCTC 13251).